The primary structure comprises 301 residues: Ribosomal protein L11 methyltransferase (301 aa).

Threonine 147, glycine 168, aspartate 190, and asparagine 237 together coordinate S-adenosyl-L-methionine.

Belongs to the methyltransferase superfamily. PrmA family.

Its subcellular location is the cytoplasm. It carries out the reaction L-lysyl-[protein] + 3 S-adenosyl-L-methionine = N(6),N(6),N(6)-trimethyl-L-lysyl-[protein] + 3 S-adenosyl-L-homocysteine + 3 H(+). Methylates ribosomal protein L11. This Synechococcus sp. (strain RCC307) protein is Ribosomal protein L11 methyltransferase.